The sequence spans 242 residues: Probable pectate lyase D (242 aa).

The signal sequence occupies residues 1 to 17 (MYQKSLLFSLLASSALA). N-linked (GlcNAc...) asparagine glycosylation is present at asparagine 216. Residues 217–242 (DTGAEPEEISEGPSDACQYSEPLSSC) form a disordered region.

It belongs to the polysaccharide lyase 3 family. The cofactor is Ca(2+).

It is found in the secreted. It catalyses the reaction Eliminative cleavage of (1-&gt;4)-alpha-D-galacturonan to give oligosaccharides with 4-deoxy-alpha-D-galact-4-enuronosyl groups at their non-reducing ends.. In terms of biological role, pectinolytic enzyme consist of four classes of enzymes: pectin lyase, polygalacturonase, pectin methylesterase and rhamnogalacturonase. Among pectinolytic enzymes, pectin lyase is the most important in depolymerization of pectin, since it cleaves internal glycosidic bonds of highly methylated pectins. Favors pectate, the anion, over pectin, the methyl ester. The chain is Probable pectate lyase D (plyD) from Aspergillus fumigatus (strain CBS 144.89 / FGSC A1163 / CEA10) (Neosartorya fumigata).